We begin with the raw amino-acid sequence, 408 residues long: PTI1-like tyrosine-protein kinase 3 (408 aa).

Residues 59-76 (SSENEHLRSPKHHNDFGH) are compositionally biased toward basic and acidic residues. Residues 59 to 91 (SSENEHLRSPKHHNDFGHHTRKPQAAVKPDALK) form a disordered region. The Protein kinase domain occupies 113 to 395 (FGSKSLIGEG…IVVKALQPLL (283 aa)). Residues 119–127 (IGEGSYGRA) and Lys-141 contribute to the ATP site. Asp-245 functions as the Proton acceptor in the catalytic mechanism.

It belongs to the protein kinase superfamily. Tyr protein kinase family. As to quaternary structure, interacts with OXI1. Post-translationally, phosphorylated by OXI1.

It is found in the cell membrane. It carries out the reaction L-tyrosyl-[protein] + ATP = O-phospho-L-tyrosyl-[protein] + ADP + H(+). This Arabidopsis thaliana (Mouse-ear cress) protein is PTI1-like tyrosine-protein kinase 3 (PTI13).